The primary structure comprises 153 residues: UPF0260 protein CKO_01185 (153 aa).

Belongs to the UPF0260 family.

The protein is UPF0260 protein CKO_01185 of Citrobacter koseri (strain ATCC BAA-895 / CDC 4225-83 / SGSC4696).